The following is an 881-amino-acid chain: Putative cation exchanger C521.04c (881 aa).

The segment covering M1–Q19 has biased composition (polar residues). Disordered stretches follow at residues M1–L39 and A52–E142. The segment covering N63 to T77 has biased composition (basic and acidic residues). The segment covering R83 to R95 has biased composition (polar residues). A compositionally biased stretch (low complexity) spans R99–R113. The residue at position 129 (S129) is a Phosphoserine. The next 8 membrane-spanning stretches (helical) occupy residues I200–F220, L329–V349, I407–F427, V438–A458, G471–L491, I504–I524, G537–F557, and L594–F614. Positions V641 to P717 are disordered. The span at N646 to S657 shows a compositional bias: polar residues. Low complexity predominate over residues S678–N688. Transmembrane regions (helical) follow at residues I726–V746, L762–L782, S794–F814, L828–L848, and Y859–F879.

The protein belongs to the Ca(2+):cation antiporter (CaCA) (TC 2.A.19) family.

It localises to the endoplasmic reticulum membrane. Putative cation exchanger. In Schizosaccharomyces pombe (strain 972 / ATCC 24843) (Fission yeast), this protein is Putative cation exchanger C521.04c.